The following is a 266-amino-acid chain: Ribosomal RNA small subunit methyltransferase A (266 aa).

Residues Asn16, Leu18, Gly43, Glu64, Asp89, and Asn110 each contribute to the S-adenosyl-L-methionine site.

The protein belongs to the class I-like SAM-binding methyltransferase superfamily. rRNA adenine N(6)-methyltransferase family. RsmA subfamily.

The protein localises to the cytoplasm. It catalyses the reaction adenosine(1518)/adenosine(1519) in 16S rRNA + 4 S-adenosyl-L-methionine = N(6)-dimethyladenosine(1518)/N(6)-dimethyladenosine(1519) in 16S rRNA + 4 S-adenosyl-L-homocysteine + 4 H(+). Specifically dimethylates two adjacent adenosines (A1518 and A1519) in the loop of a conserved hairpin near the 3'-end of 16S rRNA in the 30S particle. May play a critical role in biogenesis of 30S subunits. The sequence is that of Ribosomal RNA small subunit methyltransferase A from Marinomonas sp. (strain MWYL1).